Consider the following 244-residue polypeptide: Probable histone-lysine N-methyltransferase set-23 (244 aa).

The region spanning 25–86 is the Pre-SET domain; the sequence is EGCNCEAECS…SCRNRVVQCG (62 aa). C27, C29, C33, C39, C41, C65, C69, C71, and C78 together coordinate Zn(2+). The SET domain maps to 89–213; that stretch reads KKLEIFSTCE…RGEELCYDYG (125 aa). S-adenosyl-L-methionine is bound by residues 101-103, D141, Y143, R170, and 173-174; these read KGF and NH. Zn(2+) contacts are provided by C176, C225, C227, and C232. A Post-SET domain is found at 221-237; that stretch reads NRKLCLCKSEKCRKYLP.

The protein belongs to the class V-like SAM-binding methyltransferase superfamily. Histone-lysine methyltransferase family. Suvar3-9 subfamily.

The protein localises to the nucleus. It localises to the chromosome. The enzyme catalyses L-lysyl-[histone] + S-adenosyl-L-methionine = N(6)-methyl-L-lysyl-[histone] + S-adenosyl-L-homocysteine + H(+). Probable histone methyltransferase. Required for embryonic development. The polypeptide is Probable histone-lysine N-methyltransferase set-23 (set-23) (Caenorhabditis elegans).